Reading from the N-terminus, the 139-residue chain is D-ribose pyranase (139 aa).

Catalysis depends on His-20, which acts as the Proton donor. Residues Asp-28, His-106, and 128 to 130 (YAN) contribute to the substrate site.

Belongs to the RbsD / FucU family. RbsD subfamily. As to quaternary structure, homodecamer.

It is found in the cytoplasm. The catalysed reaction is beta-D-ribopyranose = beta-D-ribofuranose. It functions in the pathway carbohydrate metabolism; D-ribose degradation; D-ribose 5-phosphate from beta-D-ribopyranose: step 1/2. In terms of biological role, catalyzes the interconversion of beta-pyran and beta-furan forms of D-ribose. In Salmonella arizonae (strain ATCC BAA-731 / CDC346-86 / RSK2980), this protein is D-ribose pyranase.